A 437-amino-acid polypeptide reads, in one-letter code: GTPase Obg (437 aa).

In terms of domain architecture, Obg spans 2-160; that stretch reads SMFLDTAKIK…RNLELELKVL (159 aa). Residues 161 to 338 form the OBG-type G domain; sequence ADVGLVGFPS…LLEATAELLE (178 aa). GTP is bound by residues 167 to 174, 192 to 196, 214 to 217, 284 to 287, and 319 to 321; these read GFPSVGKS, FTTIV, DLPG, NKMD, and SGI. The Mg(2+) site is built by S174 and T194. The region spanning 359–437 is the OCT domain; the sequence is GFNPDEPEFA…IGKFEFEFVD (79 aa).

It belongs to the TRAFAC class OBG-HflX-like GTPase superfamily. OBG GTPase family. In terms of assembly, monomer. Requires Mg(2+) as cofactor.

The protein localises to the cytoplasm. An essential GTPase which binds GTP, GDP and possibly (p)ppGpp with moderate affinity, with high nucleotide exchange rates and a fairly low GTP hydrolysis rate. Plays a role in control of the cell cycle, stress response, ribosome biogenesis and in those bacteria that undergo differentiation, in morphogenesis control. This Streptococcus suis (strain 98HAH33) protein is GTPase Obg.